A 103-amino-acid chain; its full sequence is Large ribosomal subunit protein bL21 (103 aa).

This sequence belongs to the bacterial ribosomal protein bL21 family. Part of the 50S ribosomal subunit. Contacts protein L20.

This protein binds to 23S rRNA in the presence of protein L20. The polypeptide is Large ribosomal subunit protein bL21 (Salmonella paratyphi A (strain ATCC 9150 / SARB42)).